Reading from the N-terminus, the 274-residue chain is NAD(P)H dehydrogenase [quinone] 1 (274 aa).

Residues histidine 12, 18–19, and glutamine 67 contribute to the FAD site; that span reads FN. The residue at position 82 (serine 82) is a Phosphoserine. 104-107 is an FAD binding site; that stretch reads LQWF. Position 126-128 (126-128) interacts with substrate; that stretch reads AYT. FAD contacts are provided by residues 148–151, tyrosine 156, and arginine 201; that span reads TTGG. Residues 225 to 274 are important for apoenzyme conformational stability; sequence PSSLFDLNFQAGFLMKKEVQDEEKNKKFGLSVGHHLGKSIPTDNQIKARK. Glycyl lysine isopeptide (Lys-Gly) (interchain with G-Cter in SUMO2) cross-links involve residues lysine 250 and lysine 251.

It belongs to the NAD(P)H dehydrogenase (quinone) family. As to quaternary structure, homodimer. Interacts with PDLIM4 isoform 2; this interaction stabilizes PDLIM4 isoform 2 in response to oxidative stress and protects it from ubiquitin-independent degradation by the core 20S proteasome. Interacts with TP73 (via SAM domain); this interaction is NADH-dependent, stabilizes TP73 in response to oxidative stress and protects it from ubiquitin-independent degradation by the 20S proteasome. Interacts with TP53; this interaction is NADH-dependent, stabilizes TP53 in response to oxidative stress and protects it from ubiquitin-independent degradation by the 20S proteasome. FAD is required as a cofactor.

Its subcellular location is the cytoplasm. The protein resides in the cytosol. The enzyme catalyses a quinone + NADH + H(+) = a quinol + NAD(+). It carries out the reaction a quinone + NADPH + H(+) = a quinol + NADP(+). It catalyses the reaction ubiquinone-10 + NADH + H(+) = ubiquinol-10 + NAD(+). The catalysed reaction is menadione + NADH + H(+) = menadiol + NAD(+). Its activity is regulated as follows. Inhibited by dicoumarol. Functionally, flavin-containing quinone reductase that catalyzes two-electron reduction of quinones to hydroquinones using either NADH or NADPH as electron donors. In a ping-pong kinetic mechanism, the electrons are sequentially transferred from NAD(P)H to flavin cofactor and then from reduced flavin to the quinone, bypassing the formation of semiquinone and reactive oxygen species. Regulates cellular redox state primarily through quinone detoxification. Reduces components of plasma membrane redox system such as coenzyme Q and vitamin quinones, producing antioxidant hydroquinone forms. In the process may function as superoxide scavenger to prevent hydroquinone oxidation and facilitate excretion. Alternatively, can activate quinones and their derivatives by generating redox reactive hydroquinones with DNA cross-linking antitumor potential. Acts as a gatekeeper of the core 20S proteasome known to degrade proteins with unstructured regions. Upon oxidative stress, interacts with tumor suppressors TP53 and TP73 in a NADH-dependent way and inhibits their ubiquitin-independent degradation by the 20S proteasome. The polypeptide is NAD(P)H dehydrogenase [quinone] 1 (Homo sapiens (Human)).